Reading from the N-terminus, the 101-residue chain is Ubiquitin-related modifier 1 (101 aa).

Gly-101 is modified (1-thioglycine). Residue Gly-101 forms a Glycyl lysine isopeptide (Gly-Lys) (interchain with K-? in acceptor proteins) linkage.

The protein belongs to the URM1 family. Post-translationally, C-terminal thiocarboxylation occurs in 2 steps, it is first acyl-adenylated (-COAMP) via the hesA/moeB/thiF part of UBA4, then thiocarboxylated (-COSH) via the rhodanese domain of UBA4.

It is found in the cytoplasm. It participates in tRNA modification; 5-methoxycarbonylmethyl-2-thiouridine-tRNA biosynthesis. Acts as a sulfur carrier required for 2-thiolation of mcm(5)S(2)U at tRNA wobble positions of cytosolic tRNA(Lys), tRNA(Glu) and tRNA(Gln). Serves as sulfur donor in tRNA 2-thiolation reaction by being thiocarboxylated (-COSH) at its C-terminus by the MOCS3 homolog UBA4. The sulfur is then transferred to tRNA to form 2-thiolation of mcm(5)S(2)U. Prior mcm(5) tRNA modification by the elongator complex is required for 2-thiolation. Also acts as a ubiquitin-like protein (UBL) that is covalently conjugated via an isopeptide bond to lysine residues of target proteins such as AHP1. The thiocarboxylated form serves as substrate for conjugation and oxidative stress specifically induces the formation of UBL-protein conjugates. In Debaryomyces hansenii (strain ATCC 36239 / CBS 767 / BCRC 21394 / JCM 1990 / NBRC 0083 / IGC 2968) (Yeast), this protein is Ubiquitin-related modifier 1.